Consider the following 370-residue polypeptide: Flagellar P-ring protein (370 aa).

The first 21 residues, M1 to A21, serve as a signal peptide directing secretion.

This sequence belongs to the FlgI family. In terms of assembly, the basal body constitutes a major portion of the flagellar organelle and consists of four rings (L,P,S, and M) mounted on a central rod.

The protein localises to the periplasm. It is found in the bacterial flagellum basal body. Its function is as follows. Assembles around the rod to form the L-ring and probably protects the motor/basal body from shearing forces during rotation. This chain is Flagellar P-ring protein, found in Pseudoalteromonas atlantica (strain T6c / ATCC BAA-1087).